Consider the following 425-residue polypeptide: DNA replication and repair protein RecF (425 aa).

30–37 (GPNGHGKT) contacts ATP.

This sequence belongs to the RecF family.

It is found in the cytoplasm. The RecF protein is involved in DNA metabolism; it is required for DNA replication and normal SOS inducibility. RecF binds preferentially to single-stranded, linear DNA. It also seems to bind ATP. The chain is DNA replication and repair protein RecF from Corynebacterium jeikeium (strain K411).